Here is a 761-residue protein sequence, read N- to C-terminus: Polyribonucleotide nucleotidyltransferase (761 aa).

2 residues coordinate Mg(2+): Asp532 and Asp538. Residues 598-657 form the KH domain; that stretch reads PRVISVQIPVDKIGELIGPKGKTINAIQDETGADISIDEDGTVYIGAVDGPSAEAARAQV. An S1 motif domain is found at 669-741; it reads GEQFLGTVVK…DRGKLSLAPV (73 aa).

Belongs to the polyribonucleotide nucleotidyltransferase family. Mg(2+) is required as a cofactor.

The protein resides in the cytoplasm. It carries out the reaction RNA(n+1) + phosphate = RNA(n) + a ribonucleoside 5'-diphosphate. Its function is as follows. Involved in mRNA degradation. Catalyzes the phosphorolysis of single-stranded polyribonucleotides processively in the 3'- to 5'-direction. This chain is Polyribonucleotide nucleotidyltransferase, found in Leifsonia xyli subsp. xyli (strain CTCB07).